A 790-amino-acid polypeptide reads, in one-letter code: Cadherin-18 (790 aa).

An N-terminal signal peptide occupies residues 1–24 (MKITSTSCICPVLVCLCFVQRCYG). Positions 25–53 (TAHHSSIKVMRNQTKHIEGETEVHHRPKR) are excised as a propeptide. Asn36 carries an N-linked (GlcNAc...) asparagine glycan. Cadherin domains lie at 54–159 (GWVW…APKF), 160–268 (TDGP…PPRF), 269–383 (PQKH…PPLF), 384–486 (SMPS…DNPP), and 487–608 (ELAR…FLSS). At 54 to 608 (GWVWNQFFVL…TCHAEAFLSS (555 aa)) the chain is on the extracellular side. N-linked (GlcNAc...) asparagine glycosylation is present at Asn255. Residues Asn455 and Asn536 are each glycosylated (N-linked (GlcNAc...) asparagine). A helical membrane pass occupies residues 609–636 (AGLSTGALIAILLCVLILLAIVVLFITL). At 637–790 (RRSKKEPLII…YGEIESERTT (154 aa)) the chain is on the cytoplasmic side. The residue at position 786 (Ser786) is a Phosphoserine.

Its subcellular location is the cell membrane. Cadherins are calcium-dependent cell adhesion proteins. They preferentially interact with themselves in a homophilic manner in connecting cells; cadherins may thus contribute to the sorting of heterogeneous cell types. In Homo sapiens (Human), this protein is Cadherin-18 (CDH18).